A 911-amino-acid chain; its full sequence is Protein translocase subunit SecA (911 aa).

ATP contacts are provided by residues Q87, 105–109 (GEGKT), and D512. A disordered region spans residues 861-880 (APGLGSEQLSEEGAEVAVAS). Zn(2+) contacts are provided by C895, C897, C906, and H907.

It belongs to the SecA family. Monomer and homodimer. Part of the essential Sec protein translocation apparatus which comprises SecA, SecYEG and auxiliary proteins SecDF-YajC and YidC. Zn(2+) serves as cofactor.

It is found in the cell inner membrane. It localises to the cytoplasm. The catalysed reaction is ATP + H2O + cellular proteinSide 1 = ADP + phosphate + cellular proteinSide 2.. In terms of biological role, part of the Sec protein translocase complex. Interacts with the SecYEG preprotein conducting channel. Has a central role in coupling the hydrolysis of ATP to the transfer of proteins into and across the cell membrane, serving both as a receptor for the preprotein-SecB complex and as an ATP-driven molecular motor driving the stepwise translocation of polypeptide chains across the membrane. The sequence is that of Protein translocase subunit SecA from Pseudomonas putida (strain ATCC 47054 / DSM 6125 / CFBP 8728 / NCIMB 11950 / KT2440).